The following is a 327-amino-acid chain: Zinc transport protein ZntB (327 aa).

The Cytoplasmic segment spans residues 1–271 (MESFAGKELQ…AMNRRTYTMS (271 aa)). Residues 272-292 (LLAMVFLPTTFLTGLFGVNLG) form a helical membrane-spanning segment. The Periplasmic portion of the chain corresponds to 293–300 (GIPGGDAP). The chain crosses the membrane as a helical span at residues 301–321 (FGFFTFCLMLVILVGGVAWWL). At 322–327 (KRSKWL) the chain is on the cytoplasmic side.

The protein belongs to the CorA metal ion transporter (MIT) (TC 1.A.35) family.

The protein localises to the cell inner membrane. The catalysed reaction is Zn(2+)(out) + H(+)(out) = Zn(2+)(in) + H(+)(in). Its function is as follows. Zinc transporter. Acts as a Zn(2+):proton symporter, which likely mediates zinc ion uptake. The sequence is that of Zinc transport protein ZntB from Pectobacterium carotovorum subsp. carotovorum (strain PC1).